We begin with the raw amino-acid sequence, 563 residues long: Coiled-coil domain-containing protein 38 (563 aa).

Coiled-coil stretches lie at residues 129-212 (KRNT…KTEF), 384-415 (NIEF…RSRL), and 485-522 (ERMK…AVAQ). The disordered stretch occupies residues 521–550 (AQPKKKLGRRLVYHSKPPSANKQQLPLVNE). Residues 523 to 533 (PKKKLGRRLVY) show a composition bias toward basic residues.

Interacts with CCDC42, CFAP53, IFT88 and ODF2. Interacts with CCDC146. Interacts with TEKT3. Interacts with ubiquitinated histone H2A.

The protein localises to the cytoplasm. It is found in the cytoskeleton. It localises to the microtubule organizing center. The protein resides in the centrosome. Its subcellular location is the perinuclear region. The protein localises to the cell projection. It is found in the cilium. It localises to the flagellum. Its function is as follows. Essential for male fertility. Required for sperm flagellum biogenesis. Also required for acrosome biogenesis. Required for the attachment of developing acrosomes to the nucleus during spermiogenesis and may be involved in the transport of fibrous sheath components. In Macaca fascicularis (Crab-eating macaque), this protein is Coiled-coil domain-containing protein 38 (CCDC38).